Consider the following 122-residue polypeptide: MVRMATKPPSMTPTPPTGAPPRDDGGSVVLERRTQRTQPPQMYQVVMLNDDYTPMEFVIVVLQEFFGKDREAATQIMLKIHLDGKGVCGVYSRDVAATKVEQVREAAHKAGHPLQCLSEPVE.

Residues 1-27 are disordered; the sequence is MVRMATKPPSMTPTPPTGAPPRDDGGS. Residues 10-19 are compositionally biased toward pro residues; sequence SMTPTPPTGA.

It belongs to the ClpS family. As to quaternary structure, binds to the N-terminal domain of the chaperone ClpA.

Involved in the modulation of the specificity of the ClpAP-mediated ATP-dependent protein degradation. The protein is ATP-dependent Clp protease adapter protein ClpS of Paracidovorax citrulli (strain AAC00-1) (Acidovorax citrulli).